The chain runs to 374 residues: Alcohol dehydrogenase class-3 (374 aa).

S2 carries the post-translational modification N-acetylserine. Zn(2+) is bound by residues C45, H67, C97, C100, C103, C111, and C174. Position 233 is an N6-succinyllysine (K233). At S247 the chain carries Phosphoserine. K315 carries the N6-succinyllysine modification. 2 positions are modified to phosphoserine: S324 and S351.

The protein belongs to the zinc-containing alcohol dehydrogenase family. Class-III subfamily. In terms of assembly, homodimer. It depends on Zn(2+) as a cofactor.

It localises to the cytoplasm. The catalysed reaction is a primary alcohol + NAD(+) = an aldehyde + NADH + H(+). The enzyme catalyses a secondary alcohol + NAD(+) = a ketone + NADH + H(+). It catalyses the reaction S-(hydroxymethyl)glutathione + NADP(+) = S-formylglutathione + NADPH + H(+). It carries out the reaction S-(hydroxymethyl)glutathione + NAD(+) = S-formylglutathione + NADH + H(+). The catalysed reaction is 20-oxo-(5Z,8Z,11Z,14Z)-eicosatetraenoate + NAD(+) + H2O = (5Z,8Z,11Z,14Z)-eicosatetraenedioate + NADH + 2 H(+). The enzyme catalyses 20-hydroxy-(5Z,8Z,11Z,14Z)-eicosatetraenoate + NAD(+) = 20-oxo-(5Z,8Z,11Z,14Z)-eicosatetraenoate + NADH + H(+). It catalyses the reaction S-nitrosoglutathione + NADH + H(+) = S-(hydroxysulfenamide)glutathione + NAD(+). Its function is as follows. Catalyzes the oxidation of long-chain primary alcohols and the oxidation of S-(hydroxymethyl) glutathione. Also oxidizes long chain omega-hydroxy fatty acids, such as 20-HETE, producing both the intermediate aldehyde, 20-oxoarachidonate and the end product, a dicarboxylic acid, (5Z,8Z,11Z,14Z)-eicosatetraenedioate. Class-III ADH is remarkably ineffective in oxidizing ethanol. Required for clearance of cellular formaldehyde, a cytotoxic and carcinogenic metabolite that induces DNA damage. Also acts as a S-nitroso-glutathione reductase by catalyzing the NADH-dependent reduction of S-nitrosoglutathione, thereby regulating protein S-nitrosylation. The chain is Alcohol dehydrogenase class-3 from Equus caballus (Horse).